Consider the following 342-residue polypeptide: Lipase B (342 aa).

The signal sequence occupies residues 1 to 18; it reads MKLLSLTGVAGVLATCVA. Positions 19-25 are excised as a propeptide; that stretch reads ATPLVKR. Cys-47 and Cys-89 are disulfide-bonded. Residue Asn-99 is glycosylated (N-linked (GlcNAc...) asparagine). Catalysis depends on residues Ser-130, Asp-212, and His-249. Disulfide bonds link Cys-241/Cys-283 and Cys-318/Cys-336.

It catalyses the reaction a triacylglycerol + H2O = a diacylglycerol + a fatty acid + H(+). In terms of biological role, hydrolysis of triglycerides. Is very stereospecific both in hydrolysis and in organic synthesis and has a potentially important application in glucolipid synthesis. In Pseudozyma antarctica (Yeast), this protein is Lipase B.